The primary structure comprises 344 residues: uncharacterized protein (344 aa).

This is an uncharacterized protein from Aquifex aeolicus (strain VF5).